The chain runs to 125 residues: Transmembrane protein 14EP (125 aa).

Helical transmembrane passes span 9 to 29 (VPLY…GISG) and 81 to 101 (ILTL…LIVS).

Belongs to the TMEM14 family.

The protein localises to the membrane. This is Transmembrane protein 14EP (TMEM14EP) from Homo sapiens (Human).